A 476-amino-acid polypeptide reads, in one-letter code: Serine/threonine-protein kinase Chk1 (476 aa).

An interaction with CLSPN region spans residues Met-1–Tyr-265. A Protein kinase domain is found at Trp-9–Tyr-265. ATP is bound by residues Leu-15–Val-23 and Lys-38. The active-site Proton acceptor is the Asp-130. Lys-132 is covalently cross-linked (Glycyl lysine isopeptide (Lys-Gly) (interchain with G-Cter in ubiquitin)). A disordered region spans residues Lys-270–Leu-327. Ser-280, Ser-286, Ser-296, and Ser-301 each carry phosphoserine. The segment covering Gly-281 to Glu-320 has biased composition (polar residues). Ser-317 is modified (phosphoserine; by ATM and ATR). At Ser-331 the chain carries Phosphoserine. Ser-345 is modified (phosphoserine; by ATM and ATR). The tract at residues Gln-391 to Thr-476 is autoinhibitory region. Residue Lys-436 forms a Glycyl lysine isopeptide (Lys-Gly) (interchain with G-Cter in ubiquitin) linkage. 2 positions are modified to phosphoserine: Ser-467 and Ser-468.

This sequence belongs to the protein kinase superfamily. CAMK Ser/Thr protein kinase family. NIM1 subfamily. Interacts (phosphorylated by ATR) with RAD51. Interacts with and phosphorylates CLSPN, an adapter protein that regulates the ATR-dependent phosphorylation of CHEK1. Interacts with BRCA1. Interacts with and phosphorylates CDC25A, CDC25B and CDC25C. Interacts with FBXO6, which regulates CHEK1. Interacts with PPM1D, which regulates CHEK1 through dephosphorylation. Interacts with TIMELESS; DNA damage-dependent. Interacts with FEM1B; activates CHEK1 in response to stress. Interacts with TLK1. Interacts with XPO1 and YWHAZ. Interacts with CDK5RAP3; antagonizes CHEK1. As to quaternary structure, isoform 1 associates with isoform 2, the interaction is disrupted upon phosphorylation by ATR. Phosphorylated by ATR in a RAD17-dependent manner in response to ultraviolet irradiation and inhibition of DNA replication. Phosphorylated by ATM in response to ionizing irradiation. ATM and ATR can both phosphorylate Ser-317 and Ser-345 and this results in enhanced kinase activity. Phosphorylation at Ser-345 induces a change in the conformation of the protein, activates the kinase activity and is a prerequisite for interaction with FBXO6 and subsequent ubiquitination at Lys-436. Phosphorylation at Ser-345 also increases binding to 14-3-3 proteins and promotes nuclear retention. Conversely, dephosphorylation at Ser-345 by PPM1D may contribute to exit from checkpoint mediated cell cycle arrest. Phosphorylation at Ser-280 by AKT1/PKB, may promote mono and/or diubiquitination. Also phosphorylated at undefined residues during mitotic arrest, resulting in decreased activity. In terms of processing, ubiquitinated. Mono or diubiquitination promotes nuclear exclusion. The activated form (phosphorylated on Ser-345) is polyubiquitinated at Lys-436 by some SCF-type E3 ubiquitin ligase complex containing FBXO6 promoting its degradation. Ubiquitination and degradation are required to terminate the checkpoint and ensure that activated CHEK1 does not accumulate as cells progress through S phase, when replication forks encounter transient impediments during normal DNA replication. 'Lys-63'-mediated ubiquitination by TRAF4 at Lys-132 activates cell cycle arrest and activation of DNA repair. Post-translationally, proteolytically cleaved at the C-terminus by SPRTN during normal DNA replication, thereby promoting CHEK1 removal from chromatin and activating the protein kinase activity. Expressed ubiquitously with the most abundant expression in thymus, testis, small intestine and colon.

It localises to the nucleus. The protein localises to the chromosome. It is found in the cytoplasm. The protein resides in the cytoskeleton. Its subcellular location is the microtubule organizing center. It localises to the centrosome. It catalyses the reaction L-seryl-[protein] + ATP = O-phospho-L-seryl-[protein] + ADP + H(+). It carries out the reaction L-threonyl-[protein] + ATP = O-phospho-L-threonyl-[protein] + ADP + H(+). Activated through phosphorylation predominantly by ATR but also by ATM in response to DNA damage or inhibition of DNA replication. Activation is modulated by several mediators including CLSPN, BRCA1 and FEM1B. Proteolytic cleavage at the C-terminus by SPRTN during normal DNA replication activates the protein kinase activity. In terms of biological role, serine/threonine-protein kinase which is required for checkpoint-mediated cell cycle arrest and activation of DNA repair in response to the presence of DNA damage or unreplicated DNA. May also negatively regulate cell cycle progression during unperturbed cell cycles. This regulation is achieved by a number of mechanisms that together help to preserve the integrity of the genome. Recognizes the substrate consensus sequence [R-X-X-S/T]. Binds to and phosphorylates CDC25A, CDC25B and CDC25C. Phosphorylation of CDC25A at 'Ser-178' and 'Thr-507' and phosphorylation of CDC25C at 'Ser-216' creates binding sites for 14-3-3 proteins which inhibit CDC25A and CDC25C. Phosphorylation of CDC25A at 'Ser-76', 'Ser-124', 'Ser-178', 'Ser-279' and 'Ser-293' promotes proteolysis of CDC25A. Phosphorylation of CDC25A at 'Ser-76' primes the protein for subsequent phosphorylation at 'Ser-79', 'Ser-82' and 'Ser-88' by NEK11, which is required for polyubiquitination and degradation of CDCD25A. Inhibition of CDC25 leads to increased inhibitory tyrosine phosphorylation of CDK-cyclin complexes and blocks cell cycle progression. Also phosphorylates NEK6. Binds to and phosphorylates RAD51 at 'Thr-309', which promotes the release of RAD51 from BRCA2 and enhances the association of RAD51 with chromatin, thereby promoting DNA repair by homologous recombination. Phosphorylates multiple sites within the C-terminus of TP53, which promotes activation of TP53 by acetylation and promotes cell cycle arrest and suppression of cellular proliferation. Also promotes repair of DNA cross-links through phosphorylation of FANCE. Binds to and phosphorylates TLK1 at 'Ser-743', which prevents the TLK1-dependent phosphorylation of the chromatin assembly factor ASF1A. This may enhance chromatin assembly both in the presence or absence of DNA damage. May also play a role in replication fork maintenance through regulation of PCNA. May regulate the transcription of genes that regulate cell-cycle progression through the phosphorylation of histones. Phosphorylates histone H3.1 (to form H3T11ph), which leads to epigenetic inhibition of a subset of genes. May also phosphorylate RB1 to promote its interaction with the E2F family of transcription factors and subsequent cell cycle arrest. Phosphorylates SPRTN, promoting SPRTN recruitment to chromatin. Reduces replication stress and activates the G2/M checkpoint, by phosphorylating and inactivating PABIR1/FAM122A and promoting the serine/threonine-protein phosphatase 2A-mediated dephosphorylation and stabilization of WEE1 levels and activity. Functionally, endogenous repressor of isoform 1, interacts with, and antagonizes CHK1 to promote the S to G2/M phase transition. The chain is Serine/threonine-protein kinase Chk1 (CHEK1) from Homo sapiens (Human).